A 163-amino-acid chain; its full sequence is Disulfide bond formation protein B 1 (163 aa).

Residues 1 to 9 (MPLASPRQL) are Cytoplasmic-facing. A helical transmembrane segment spans residues 10 to 26 (FLLAFLACVAIMGGALY). The Periplasmic portion of the chain corresponds to 27 to 44 (LEHVVGLEACPLCVVQRI). Cysteine 36 and cysteine 39 are joined by a disulfide. The helical transmembrane segment at 45-61 (FFILIGLTCLAGAIQGP) threads the bilayer. At 62–67 (GLRGRR) the chain is on the cytoplasmic side. Residues 68–85 (IYSVLVFLLALGGGATAA) traverse the membrane as a helical segment. Residues 86-142 (RQVWLQTVPLDQLPACLPSLDYMMQALPFQEVIRLVLHGTADCAQVSWTLFTLSIPE) are Periplasmic-facing. A disulfide bridge connects residues cysteine 101 and cysteine 128. Residues 143–161 (WSLLAFVAYLGFSIVQFLR) form a helical membrane-spanning segment. At 162-163 (RA) the chain is on the cytoplasmic side.

Belongs to the DsbB family.

The protein localises to the cell inner membrane. Its function is as follows. Required for disulfide bond formation in some periplasmic proteins. Acts by oxidizing the DsbA protein. The chain is Disulfide bond formation protein B 1 (dsbB1) from Pseudomonas aeruginosa (strain ATCC 15692 / DSM 22644 / CIP 104116 / JCM 14847 / LMG 12228 / 1C / PRS 101 / PAO1).